A 620-amino-acid polypeptide reads, in one-letter code: Estrogen receptor (620 aa).

2 stretches are compositionally biased toward polar residues: residues 1–10 and 101–111; these read MSKRQSSVQI and GSLQSLGSGPT. 2 disordered regions span residues 1–55 and 88–111; these read MSKR…RGSG and YSAPLETNGPPSEGSLQSLGSGPT. The modulating stretch occupies residues 1-185; that stretch reads MSKRQSSVQI…GFEMAKDTRF (185 aa). 2 NR C4-type zinc fingers span residues 186–206 and 222–246; these read CAVCSDYASGYHYGVWSCEGC and CPATNQCTIDRNRRKSCQACRLRKC. Positions 186–251 form a DNA-binding region, nuclear receptor; it reads CAVCSDYASG…RLRKCYEVGM (66 aa). Positions 252-314 are hinge; sequence MKGGVRKDRI…GGGRLSVTSI (63 aa). The disordered stretch occupies residues 286 to 308; that stretch reads KTVHYDGRKRSSTGGGGGGGGGR. Gly residues predominate over residues 298–308; the sequence is TGGGGGGGGGR. The region spanning 315–551 is the NR LBD domain; the sequence is PPEQVLLLLQ…DLLLEMLDAH (237 aa). A disordered region spans residues 558–620; that stretch reads RAPQSLSQVD…RPDCTPALQD (63 aa).

The protein belongs to the nuclear hormone receptor family. NR3 subfamily. In terms of assembly, binds DNA as a homodimer. Can form a heterodimer with ER-beta. Widely expressed in brain, ovary, testis, and female liver.

Its subcellular location is the nucleus. The steroid hormones and their receptors are involved in the regulation of eukaryotic gene expression and affect cellular proliferation and differentiation in target tissues. This chain is Estrogen receptor (esr1), found in Oryzias latipes (Japanese rice fish).